The sequence spans 361 residues: VNQIGSVTESIEAVKAALVSHGAGVAVVGRKINLAGGPSYTVELGRFDGLVSRALYGLSKLPELGTHGLTLICISWALRVMSNVHDFFVHVAAKVESIHQYIESMRYGSLSPTIFDNYSKDCMIAHGAAHFLKXRPPDPAETRGGAVADNGSGAVARMPTLEEYGTNLTKLAEEGKANFDAAMVKLKNFSFILMFGVLGTIISFCLISSGAVLLLKHHVFPDSNINPSSGAAITSGVRGDLRAYVVAYLDPSRTSFTVDNAIYGEIRRTVLAWLIDSGTLQLSEKVLALVLTMVAATVLGVAKSMIKMGQIEVLTGTQGEIRAAEIVVEQLHAESGKPVLVALTGSIDKMTKDNVLNKTCK.

Belongs to the peroxidase family. Post-translationally, partially N-glycosylated.

It is found in the secreted. The enzyme catalyses 2 a phenolic donor + H2O2 = 2 a phenolic radical donor + 2 H2O. The protein is Peroxidase A of Aloe vera (Aloe).